Consider the following 251-residue polypeptide: 1-(5-phosphoribosyl)-5-[(5-phosphoribosylamino)methylideneamino] imidazole-4-carboxamide isomerase (251 aa).

Aspartate 7 acts as the Proton acceptor in catalysis. Aspartate 131 (proton donor) is an active-site residue.

This sequence belongs to the HisA/HisF family.

The protein resides in the cytoplasm. It carries out the reaction 1-(5-phospho-beta-D-ribosyl)-5-[(5-phospho-beta-D-ribosylamino)methylideneamino]imidazole-4-carboxamide = 5-[(5-phospho-1-deoxy-D-ribulos-1-ylimino)methylamino]-1-(5-phospho-beta-D-ribosyl)imidazole-4-carboxamide. It participates in amino-acid biosynthesis; L-histidine biosynthesis; L-histidine from 5-phospho-alpha-D-ribose 1-diphosphate: step 4/9. This is 1-(5-phosphoribosyl)-5-[(5-phosphoribosylamino)methylideneamino] imidazole-4-carboxamide isomerase from Blochmanniella floridana.